The primary structure comprises 301 residues: m7GpppX diphosphatase (301 aa).

Residues E154, K176, and 237–248 (HYQPSFYHLHVH) each bind substrate. Positions 244–248 (HLHVH) match the Histidine triad motif motif. H246 (nucleophile) is an active-site residue.

This sequence belongs to the HIT family.

Its subcellular location is the nucleus. It catalyses the reaction a 5'-end (N(7)-methyl 5'-triphosphoguanosine)-ribonucleoside in mRNA + H2O = N(7)-methyl-GMP + a 5'-end diphospho-ribonucleoside in mRNA + 2 H(+). It carries out the reaction a 5'-end (N(2),N(2),N(7)-trimethyl 5'-triphosphoguanosine)-ribonucleoside in mRNA + H2O = (N(2),N(2),N(7))-trimethyl-GMP + a 5'-end diphospho-ribonucleoside in mRNA + 2 H(+). Its activity is regulated as follows. The hydrolytic product 7-methylguanosine diphosphate (m7GDP) efficiently inhibits the decapping scavenger activity and acts as a competitive inhibitor in vitro. Functionally, decapping scavenger enzyme that catalyzes the cleavage of a residual cap structure following the degradation of mRNAs of the 3'-&gt;5' exosome-mediated mRNA decay pathway. Hydrolyzes cap analog structures like 7-methylguanosine nucleoside triphosphate (m7GpppG) and tri-methyl guanosine nucleoside triphosphate (m3(2,2,7)GpppG) with up to 2 nucleotide substrates (small capped oligoribonucleotides) and specifically releases 5'-phosphorylated RNA fragments and 7-methylguanosine monophosphate (m7GMP). Does not hydrolyze unmethylated cap analog (GpppG) and shows no decapping activity on intact m7GpppG-capped mRNA molecules. Does not hydrolyze 7-methylguanosine diphosphate (m7GDP) and tri-methylguanosine diphosphate (m3(2,2,7)GDP) to m(7)GMP and m3(2,2,7)GMP, respectively. May also play a role in the 5'-&gt;3 mRNA decay pathway; m7GDP, the downstream product released by the 5'-&gt;3' mRNA mediated decapping activity, may be also converted by dcs-1 to m7GMP. Binds to m7GpppG and strongly to m7GDP. In Ascaris suum (Pig roundworm), this protein is m7GpppX diphosphatase.